Reading from the N-terminus, the 390-residue chain is Chorismate synthase (390 aa).

The NADP(+) site is built by Arg39 and Arg45. Residues 132–134 (RSS), 253–254 (NA), Gly298, 313–317 (KPIPT), and Arg339 each bind FMN.

It belongs to the chorismate synthase family. As to quaternary structure, homotetramer. It depends on FMNH2 as a cofactor.

The catalysed reaction is 5-O-(1-carboxyvinyl)-3-phosphoshikimate = chorismate + phosphate. The protein operates within metabolic intermediate biosynthesis; chorismate biosynthesis; chorismate from D-erythrose 4-phosphate and phosphoenolpyruvate: step 7/7. Functionally, catalyzes the anti-1,4-elimination of the C-3 phosphate and the C-6 proR hydrogen from 5-enolpyruvylshikimate-3-phosphate (EPSP) to yield chorismate, which is the branch point compound that serves as the starting substrate for the three terminal pathways of aromatic amino acid biosynthesis. This reaction introduces a second double bond into the aromatic ring system. The protein is Chorismate synthase of Bacillus subtilis (strain 168).